We begin with the raw amino-acid sequence, 202 residues long: Superoxide dismutase [Cu-Zn], chloroplastic (202 aa).

A chloroplast-targeting transit peptide spans 1–48 (MASQTLVSPSPLSSHSLLRTSFSGVSVKLAPQFSTLATSNFKPLTVVA). Residues H94, H96, and H111 each coordinate Cu cation. C105 and C194 are oxidised to a cystine. Zn(2+)-binding residues include H111, H119, H128, and D131. Residue H168 coordinates Cu cation.

Belongs to the Cu-Zn superoxide dismutase family. Homotetramer. It depends on Cu cation as a cofactor. Zn(2+) is required as a cofactor.

The protein localises to the plastid. The protein resides in the chloroplast. It carries out the reaction 2 superoxide + 2 H(+) = H2O2 + O2. Functionally, destroys radicals which are normally produced within the cells and which are toxic to biological systems. The chain is Superoxide dismutase [Cu-Zn], chloroplastic (SODCP) from Pisum sativum (Garden pea).